The chain runs to 2774 residues: Microtubule-associated protein 1A (2774 aa).

Phosphoserine is present on residues serine 114, serine 117, serine 118, serine 121, and serine 155. Phosphotyrosine is present on tyrosine 177. Residues 310 to 329 are disordered; that stretch reads PSKIKHRADSKESLKAAPKT. 2 positions are modified to phosphoserine: serine 319 and serine 322. Copy 1 of the repeat occupies 336–338; the sequence is KRE. The 11 X 3 AA repeats of K-K-[DE] stretch occupies residues 336-541; sequence KREEVLEEGA…TQDFEELKRE (206 aa). Residues 342-390 are compositionally biased toward basic and acidic residues; it reads EEGAKEARSELAKELAKTEKKAKEPSEKPPEKPSKSERVRGESSEALKA. Disordered stretches follow at residues 342 to 718, 737 to 808, 845 to 939, 957 to 1078, 1093 to 1344, 1357 to 1646, 1693 to 1725, 1739 to 1843, and 1861 to 2644; these read EEGA…SFLS, TIPG…TELT, EDQS…VGKE, FGAP…QTGC, ETGE…ILPE, QKDG…SPEQ, ESTF…KDFQ, LAES…VPFS, and AELE…LVNG. At serine 384 the chain carries Phosphoserine. Over residues 391-406 the composition is skewed to basic residues; sequence EKRRLIKDKAGKKHLK. Basic and acidic residues-rich tracts occupy residues 407–464 and 484–500; these read EKIS…KPDL and VKVD…ELSS. Tandem repeats lie at residues 415–417, 420–422, 424–426, 427–429, 431–433, 436–438, 440–442, 444–446, and 449–451. Position 504 is a phosphothreonine (threonine 504). Residues 506–516 show a composition bias toward low complexity; the sequence is PAQKGAAPPAA. A phosphoserine mark is found at serine 526 and serine 527. 2 stretches are compositionally biased toward basic and acidic residues: residues 536 to 554 and 584 to 595; these read EELK…DTGL and EGEHVEREKEVV. Repeat 11 spans residues 539-541; that stretch reads KRE. Residues serine 604 and serine 611 each carry the phosphoserine modification. Basic and acidic residues-rich tracts occupy residues 614–631 and 638–675; these read EVEK…REAE and AARE…ETKA. Residue serine 643 is modified to Phosphoserine. At threonine 663 the chain carries Phosphothreonine. Phosphoserine occurs at positions 666, 677, 690, and 785. 2 stretches are compositionally biased toward polar residues: residues 845 to 858 and 869 to 881; these read EDQS…PQTE and TVTS…TEAT. Phosphoserine occurs at positions 872, 875, 876, and 889. Threonine 892 carries the post-translational modification Phosphothreonine. Serine 894, serine 898, serine 907, serine 980, serine 990, serine 998, serine 1007, serine 1013, serine 1022, serine 1029, serine 1037, serine 1061, serine 1132, serine 1134, serine 1148, serine 1160, serine 1178, serine 1188, serine 1191, serine 1197, serine 1206, and serine 1209 each carry phosphoserine. The segment covering 1008–1028 has biased composition (basic and acidic residues); sequence PVEDKSEPRDFQEDSWGETKH. The span at 1142 to 1157 shows a compositional bias: polar residues; sequence SVLSVVSPDTTKQEAT. Residues 1180 to 1190 show a composition bias toward polar residues; it reads EDTQSLSFSEE. Residues 1198-1212 are compositionally biased toward polar residues; sequence LDISSKQLSPESLGT. A compositionally biased stretch (basic and acidic residues) spans 1220–1236; it reads LGKEERGPVMKAEDDSC. 5 positions are modified to phosphoserine: serine 1252, serine 1280, serine 1301, serine 1304, and serine 1307. Positions 1293-1308 are enriched in low complexity; the sequence is TSDSSLTKSPESLSSP. 5 stretches are compositionally biased toward basic and acidic residues: residues 1317–1336, 1357–1409, 1416–1428, 1436–1479, and 1487–1574; these read WEGK…ETRQ, QKDG…EDQG, AEKD…RDTD, EPRD…EHSI, and RAPD…KADS. Residues serine 1504, serine 1568, serine 1574, and serine 1594 each carry the phosphoserine modification. Residues 1599–1613 show a composition bias toward basic and acidic residues; sequence SKAREQEKKYWKEQD. Phosphoserine is present on residues serine 1622, serine 1643, serine 1715, serine 1742, serine 1757, serine 1763, and serine 1767. Polar residues predominate over residues 1707–1718; the sequence is TPLQHTPRSPWT. Threonine 1772 carries the phosphothreonine modification. 2 positions are modified to phosphoserine: serine 1778 and serine 1784. Residues 1789–1803 are compositionally biased toward polar residues; the sequence is TESTAPMRNEPTTPS. Pro residues predominate over residues 1818-1839; sequence LPPAPLSPAPAPPTPAPEPHTP. Positions 1873–1885 are enriched in basic and acidic residues; it reads KDYRKAEGEREGE. Serine 1897 is subject to Phosphoserine. Residues 1908-1930 show a composition bias toward basic and acidic residues; that stretch reads ATRDTEQTEPEQREPTPYPDERS. Residue threonine 1923 is modified to Phosphothreonine. A compositionally biased stretch (polar residues) spans 1984 to 1997; the sequence is SSPASPQNLQSDTP. A Phosphoserine modification is found at serine 1988. Residues 2008 to 2034 are compositionally biased toward pro residues; sequence AVPPRQEPDPGPNVEPSITPPAVPPRA. Phosphothreonine is present on threonine 2026. Phosphoserine occurs at positions 2043 and 2077. Basic and acidic residues predominate over residues 2055-2092; it reads PDRRTPSPKETGRGHWDDGTNDSDLEKGAREQPEKETR. A compositionally biased stretch (low complexity) spans 2115–2125; sequence SSLSSDSHLGS. Over residues 2144 to 2153 the composition is skewed to pro residues; that stretch reads PAPPQLPSPA. Phosphoserine is present on residues serine 2204, serine 2221, serine 2225, serine 2228, serine 2229, and serine 2260. Residues 2226–2237 are compositionally biased toward polar residues; it reads EGSSSEATTPVI. The span at 2271 to 2287 shows a compositional bias: low complexity; that stretch reads DLTPLSPAPSASLDLAP. Over residues 2288–2298 the composition is skewed to pro residues; sequence APAPAPAPAPG. A compositionally biased stretch (low complexity) spans 2299–2309; it reads LPGDLGDGTLP. Positions 2352–2364 are enriched in basic and acidic residues; that stretch reads AEKEEAEAPHAWE. Position 2424 is a phosphoserine (serine 2424). The span at 2477–2489 shows a compositional bias: low complexity; that stretch reads SASDSGSSQSDSD. Residues 2534–2550 show a composition bias toward pro residues; that stretch reads DPPPTPLPDPRPSPPRP. Positions 2565–2575 are enriched in basic and acidic residues; the sequence is GRVERLREKGR. The span at 2613–2623 shows a compositional bias: low complexity; sequence RTVPRPRSTPS. Serine 2620 and serine 2635 each carry phosphoserine.

It belongs to the MAP1 family. 3 different light chains, LC1 (a cleavage product of MAP1B), LC2 (a cleavage product of MAP1A) and LC3 (produced by one of the MAP1LC3 genes), can associate with the MAP1A or MAP1B heavy chains. Interacts with guanylate kinase-like domain of DLG1, DLG2 and DLG4. Binds to CSNK1D. Interacts with TIAM2. In terms of assembly, interacts with ELAVL4. Phosphorylated by CSNK1D. In terms of processing, LC2 is generated from MAP1A by proteolytic processing. It is free to associate with both MAP1A and MAP1B. As to expression, brain, heart and muscle.

It is found in the cytoplasm. The protein localises to the cytoskeleton. Its function is as follows. Structural protein involved in the filamentous cross-bridging between microtubules and other skeletal elements. The chain is Microtubule-associated protein 1A (Map1a) from Rattus norvegicus (Rat).